A 54-amino-acid chain; its full sequence is Rubredoxin-1 (54 aa).

Residues 1 to 52 (MKKWECVVCGFIYDEAEGLPDEGIEPGTAWNNVPEDWVCPDCGVGKDDFEMV) form the Rubredoxin-like domain. Fe cation is bound by residues Cys-6, Cys-9, Cys-39, and Cys-42.

The protein belongs to the rubredoxin family. Requires Fe(3+) as cofactor.

It localises to the cytoplasm. The protein operates within hydrocarbon metabolism; alkane degradation. Its function is as follows. Involved in the hydrocarbon hydroxylating system, which transfers electrons from NADH to rubredoxin reductase and then through rubredoxin to alkane 1 monooxygenase. The chain is Rubredoxin-1 (rubA) from Alcanivorax borkumensis (strain ATCC 700651 / DSM 11573 / NCIMB 13689 / SK2).